The following is a 218-amino-acid chain: Insulin-induced gene 2 protein (218 aa).

The Cytoplasmic portion of the chain corresponds to 1-21 (MGDRENVSYGSRPILAQKMNL). A helical membrane pass occupies residues 22–44 (LLRGFLLFLIGVFLALVLNLLQV). Residues 45–63 (QRNVTLFPPDVLSSLFSSA) lie on the Lumenal side of the membrane. A helical transmembrane segment spans residues 64–81 (WWVPLCCGTAAAAIGLLY). The Cytoplasmic portion of the chain corresponds to 82–96 (PCIDRHLGEPHKFKR). Residues 97-119 (EWSSVMRCVAVFVGINHASAKVD) traverse the membrane as a helical segment. Residues 120–122 (FAN) lie on the Lumenal side of the membrane. A helical membrane pass occupies residues 123–141 (NMQLSLTLAALSIGLWWTF). The Cytoplasmic segment spans residues 142–146 (DRSRS). A helical transmembrane segment spans residues 147 to 168 (GLGLGIGISFFATLVSQLLVYN). Residues 169-182 (GVYEYTAPDFLYVR) are Lumenal-facing. A helical transmembrane segment spans residues 183 to 200 (SWLPCIFFAGGITMGNIG). At 201-218 (RQLEMYERKALVEKSHRD) the chain is on the cytoplasmic side. The short motif at 212-218 (VEKSHRD) is the KxHxx element.

It belongs to the INSIG family. In terms of assembly, interacts with scap; interaction is direct and only takes place in the presence of sterols; it prevents interaction between scap and the coat protein complex II (COPII). Associates with the SCAP-SREBP complex; association is mediated via its interaction with scap and only takes place in the presence of sterols.

It localises to the endoplasmic reticulum membrane. Its function is as follows. Oxysterol-binding protein that mediates feedback control of cholesterol synthesis by controlling both endoplasmic reticulum to Golgi transport of scap and degradation of hmgcr. Acts as a negative regulator of cholesterol biosynthesis by mediating the retention of the SCAP-SREBP complex in the endoplasmic reticulum, thereby blocking the processing of sterol regulatory element-binding proteins (SREBPs). Binds oxysterol, including 22-hydroxycholesterol, 24-hydroxycholesterol, 25-hydroxycholesterol and 27-hydroxycholesterol, regulating interaction with scap and retention of the SCAP-SREBP complex in the endoplasmic reticulum. In presence of oxysterol, interacts with scap, retaining the SCAP-SREBP complex in the endoplasmic reticulum, thereby preventing scap from escorting SREBPs to the Golgi. Sterol deprivation reduce oxysterol-binding, disrupting the interaction between insig2 and scap, thereby promoting Golgi transport of the SCAP-SREBP complex, followed by processing and nuclear translocation of SREBPs. Also regulates cholesterol synthesis by regulating degradation of hmgcr. This chain is Insulin-induced gene 2 protein, found in Xenopus laevis (African clawed frog).